Consider the following 141-residue polypeptide: MENKDIRKILPHRYPFLLVDRIIELEEGKRAVGIKNVTSNEPFFQGHFPDNPIMPGVLIVEALAQVAGIAVMNVEEFKGKLGLFAGIDKCRFKKVVRPGDQLILEVSIDSIRMGLVKAKGVAKVGEEIAATAELMFVMAEE.

Residue His-47 is part of the active site.

This sequence belongs to the thioester dehydratase family. FabZ subfamily.

It localises to the cytoplasm. The catalysed reaction is a (3R)-hydroxyacyl-[ACP] = a (2E)-enoyl-[ACP] + H2O. In terms of biological role, involved in unsaturated fatty acids biosynthesis. Catalyzes the dehydration of short chain beta-hydroxyacyl-ACPs and long chain saturated and unsaturated beta-hydroxyacyl-ACPs. This is 3-hydroxyacyl-[acyl-carrier-protein] dehydratase FabZ from Caldanaerobacter subterraneus subsp. tengcongensis (strain DSM 15242 / JCM 11007 / NBRC 100824 / MB4) (Thermoanaerobacter tengcongensis).